The chain runs to 162 residues: MPSFDTVLEPNLVEVRNAVDQSSKEIGTRFDFKGSSARVELKDKDITLYADSDFQLSQVMDILTLKLTKRSVDARFLDSSAKIEKIGGDKVKQVLKVKEGIDSETAKKIQQLIKASKMKVQAAIQGDAVRVTGAKRDDLQAAMALIRKDVADVPLSFNNFRD.

It belongs to the YajQ family.

Functionally, nucleotide-binding protein. The chain is Nucleotide-binding protein Mpe_A3039 from Methylibium petroleiphilum (strain ATCC BAA-1232 / LMG 22953 / PM1).